Here is a 199-residue protein sequence, read N- to C-terminus: Ras-related and estrogen-regulated growth inhibitor (199 aa).

GTP contacts are provided by residues 13-20 (GRAGVGKS), 60-64 (DTAGQ), and 118-121 (NKAD).

The protein belongs to the small GTPase superfamily. Ras family.

It is found in the cytoplasm. It catalyses the reaction GTP + H2O = GDP + phosphate + H(+). Its function is as follows. Binds GDP/GTP and possesses intrinsic GTPase activity. Has higher affinity for GDP than for GTP. In Bos taurus (Bovine), this protein is Ras-related and estrogen-regulated growth inhibitor (RERG).